The sequence spans 305 residues: Methionyl-tRNA formyltransferase (305 aa).

108–111 (SLLP) is a (6S)-5,6,7,8-tetrahydrofolate binding site.

Belongs to the Fmt family.

It catalyses the reaction L-methionyl-tRNA(fMet) + (6R)-10-formyltetrahydrofolate = N-formyl-L-methionyl-tRNA(fMet) + (6S)-5,6,7,8-tetrahydrofolate + H(+). Attaches a formyl group to the free amino group of methionyl-tRNA(fMet). The formyl group appears to play a dual role in the initiator identity of N-formylmethionyl-tRNA by promoting its recognition by IF2 and preventing the misappropriation of this tRNA by the elongation apparatus. This chain is Methionyl-tRNA formyltransferase, found in Clavibacter sepedonicus (Clavibacter michiganensis subsp. sepedonicus).